Consider the following 308-residue polypeptide: Thymidylate synthase (308 aa).

Residues arginine 26 and 170–171 (RR) contribute to the dUMP site. Cysteine 190 functions as the Nucleophile in the catalytic mechanism. Residues 210 to 213 (RSCD), asparagine 221, and 251 to 253 (HVY) each bind dUMP. Aspartate 213 lines the (6R)-5,10-methylene-5,6,7,8-tetrahydrofolate pocket. Position 307 (alanine 307) interacts with (6R)-5,10-methylene-5,6,7,8-tetrahydrofolate.

It belongs to the thymidylate synthase family. Bacterial-type ThyA subfamily. Homodimer.

It localises to the cytoplasm. It carries out the reaction dUMP + (6R)-5,10-methylene-5,6,7,8-tetrahydrofolate = 7,8-dihydrofolate + dTMP. It participates in pyrimidine metabolism; dTTP biosynthesis. In terms of biological role, catalyzes the reductive methylation of 2'-deoxyuridine-5'-monophosphate (dUMP) to 2'-deoxythymidine-5'-monophosphate (dTMP) while utilizing 5,10-methylenetetrahydrofolate (mTHF) as the methyl donor and reductant in the reaction, yielding dihydrofolate (DHF) as a by-product. This enzymatic reaction provides an intracellular de novo source of dTMP, an essential precursor for DNA biosynthesis. The sequence is that of Thymidylate synthase from Rhizorhabdus wittichii (strain DSM 6014 / CCUG 31198 / JCM 15750 / NBRC 105917 / EY 4224 / RW1) (Sphingomonas wittichii).